We begin with the raw amino-acid sequence, 70 residues long: Mu-agatoxin-Ao1b (70 aa).

An N-terminal signal peptide occupies residues 1-20 (MKAIIFFCFLSVMVFIVAEA). Residues 21-33 (SSLEALKIFEGER) constitute a propeptide that is removed on maturation. 4 disulfide bridges follow: cysteine 35–cysteine 50, cysteine 42–cysteine 55, cysteine 49–cysteine 65, and cysteine 57–cysteine 63. Residue asparagine 69 is modified to Asparagine amide.

It belongs to the neurotoxin 07 (Beta/delta-agtx) family. 04 (aga-5) subfamily. Expressed by the venom gland.

It is found in the secreted. Insecticidal neurotoxin that modulates the insect Nav channel (DmNaV1/tipE (para/tipE)) in a unique manner, with both the activation and inactivation processes being affected. The voltage dependence of activation is shifted toward more hyperpolarized potentials (analogous to site 4 toxins) and a non-inactivating persistent sodium current is induced (site 3-like action). Interestingly, both effects take place in a voltage-dependent manner, producing a bell-shaped curve between -80 and 0 mV. The chain is Mu-agatoxin-Ao1b from Agelena orientalis (Funnel-web spider).